The chain runs to 409 residues: tRNA-specific 2-thiouridylase MnmA (409 aa).

Residues 40-47 (GLSGGVDS) and leucine 66 contribute to the ATP site. Residue cysteine 127 is the Nucleophile of the active site. A disulfide bond links cysteine 127 and cysteine 237. Glycine 152 is a binding site for ATP. An interaction with tRNA region spans residues 187 to 189 (KDQ). The active-site Cysteine persulfide intermediate is the cysteine 237. An interaction with tRNA region spans residues 342–343 (RY).

It belongs to the MnmA/TRMU family.

It is found in the cytoplasm. It carries out the reaction S-sulfanyl-L-cysteinyl-[protein] + uridine(34) in tRNA + AH2 + ATP = 2-thiouridine(34) in tRNA + L-cysteinyl-[protein] + A + AMP + diphosphate + H(+). In terms of biological role, catalyzes the 2-thiolation of uridine at the wobble position (U34) of tRNA, leading to the formation of s(2)U34. The polypeptide is tRNA-specific 2-thiouridylase MnmA (Prochlorococcus marinus (strain MIT 9313)).